The sequence spans 777 residues: Subtilisin-like protease SBT3.3 (777 aa).

Residues 1–24 form the signal peptide; sequence MRSFRSSILLVLLSLITVLNATRA. Positions 25-111 are cleaved as a propeptide — removed in mature form; that stretch reads RSETESKVHI…VIPDGFHELA (87 aa). Positions 32 to 109 constitute an Inhibitor I9 domain; the sequence is VHIVYLGEKK…VHVIPDGFHE (78 aa). Residues 115–624 form the Peptidase S8 domain; the sequence is TWEYLGLSSA…GGIVNPEKAA (510 aa). The N-linked (GlcNAc...) asparagine glycan is linked to N131. Residue D145 is the Charge relay system of the active site. N-linked (GlcNAc...) asparagine glycosylation occurs at N204. The active-site Charge relay system is the H220. N-linked (GlcNAc...) asparagine glycosylation is found at N235, N397, N412, N508, and N540. Positions 403–481 constitute a PA domain; that stretch reads VCESLNLNPN…ELGTDILSYI (79 aa). Residue S555 is the Charge relay system of the active site. An N-linked (GlcNAc...) asparagine glycan is attached at N647.

It belongs to the peptidase S8 family.

It localises to the secreted. Its subcellular location is the extracellular space. The protein localises to the extracellular matrix. Functionally, serine protease that plays a role in the control of the establishment of immune priming and systemic induced resistance. The sequence is that of Subtilisin-like protease SBT3.3 from Arabidopsis thaliana (Mouse-ear cress).